Reading from the N-terminus, the 390-residue chain is Stearoyl-[acyl-carrier-protein] 9-desaturase, chloroplastic (390 aa).

The N-terminal 27 residues, methionine 1–methionine 27, are a transit peptide targeting the chloroplast. Residues glutamate 132, glutamate 170, histidine 173, glutamate 223, glutamate 256, and histidine 259 each coordinate Fe cation.

It belongs to the fatty acid desaturase type 2 family. In terms of assembly, homodimer. It depends on Fe(2+) as a cofactor.

The protein localises to the plastid. It localises to the chloroplast. It catalyses the reaction octadecanoyl-[ACP] + 2 reduced [2Fe-2S]-[ferredoxin] + O2 + 2 H(+) = (9Z)-octadecenoyl-[ACP] + 2 oxidized [2Fe-2S]-[ferredoxin] + 2 H2O. The protein operates within lipid metabolism; fatty acid metabolism. In terms of biological role, converts stearoyl-ACP to oleoyl-ACP by introduction of a cis double bond between carbons 9 and 10 of the acyl chain. This Olea europaea (Common olive) protein is Stearoyl-[acyl-carrier-protein] 9-desaturase, chloroplastic.